We begin with the raw amino-acid sequence, 197 residues long: A-type ATP synthase subunit E (197 aa).

It belongs to the V-ATPase E subunit family. As to quaternary structure, has multiple subunits with at least A(3), B(3), C, D, E, F, H, I and proteolipid K(x).

The protein localises to the cell membrane. Component of the A-type ATP synthase that produces ATP from ADP in the presence of a proton gradient across the membrane. The protein is A-type ATP synthase subunit E of Thermococcus gammatolerans (strain DSM 15229 / JCM 11827 / EJ3).